The primary structure comprises 527 residues: Abrin-b (527 aa).

Pyrrolidone carboxylic acid is present on Gln1. The N-linked (GlcNAc...) asparagine glycan is linked to Asn110. Glu163 is a catalytic residue. Disulfide bonds link Cys246–Cys268, Cys285–Cys304, and Cys328–Cys345. The 128-residue stretch at 272 to 399 (YEPTVRIGGR…YLMRQGWRTG (128 aa)) folds into the Ricin B-type lectin 1 domain. A 1-alpha repeat occupies 282–324 (NGMCVDVYDDGYHNGNRIIAWKCKDRLEENQLWTLKSDKTIRS). The 1-beta repeat unit spans residues 325-365 (NGKCLTTEGYAPGNYVMIYDCTSAVAEATYWEIWDNGTIIN). Residues Asn360 and Asn400 are each glycosylated (N-linked (GlcNAc...) asparagine). Residues 368–400 (SALVLSAESSSMGGTLTVQTNEYLMRQGWRTGN) form a 1-gamma repeat. The region spanning 402-526 (TSPFVTSISG…GKPNQIWLTL (125 aa)) is the Ricin B-type lectin 2 domain. Residues 413 to 448 (SDLCMQAQGSNVWLAYCDNNKKEQQWALYTDGSIRS) form a 2-alpha repeat. 2 cysteine pairs are disulfide-bonded: Cys416–Cys429 and Cys455–Cys472. The 2-beta repeat unit spans residues 452-491 (TNNCLTSKDHKQGSPIVLMACSNGWASQRWLFRNDGSIYN). The stretch at 494-527 (DDMVMDVKRSDPSLKEIILHPYHGKPNQIWLTLF) is one 2-gamma repeat.

The protein in the N-terminal section; belongs to the ribosome-inactivating protein family. Type 2 RIP subfamily. Disulfide-linked dimer of A and B chains.

It carries out the reaction Endohydrolysis of the N-glycosidic bond at one specific adenosine on the 28S rRNA.. In terms of biological role, the A chain is responsible for inhibiting protein synthesis through the catalytic inactivation of 60S ribosomal subunits by removing adenine from position 4,324 of 28S rRNA. Abrin-a is more toxic than ricin. Functionally, the B chain is a galactose-specific lectin that facilitates the binding of abrin to the cell membrane that precedes endocytosis. This is Abrin-b from Abrus precatorius (Indian licorice).